A 424-amino-acid polypeptide reads, in one-letter code: Serine hydroxymethyltransferase (424 aa).

Residues Leu-113 and 117-119 (GHL) contribute to the (6S)-5,6,7,8-tetrahydrofolate site. Lys-222 bears the N6-(pyridoxal phosphate)lysine mark. (6S)-5,6,7,8-tetrahydrofolate is bound at residue 361–363 (SPF).

It belongs to the SHMT family. Homodimer. The cofactor is pyridoxal 5'-phosphate.

It localises to the cytoplasm. It catalyses the reaction (6R)-5,10-methylene-5,6,7,8-tetrahydrofolate + glycine + H2O = (6S)-5,6,7,8-tetrahydrofolate + L-serine. It functions in the pathway one-carbon metabolism; tetrahydrofolate interconversion. Its pathway is amino-acid biosynthesis; glycine biosynthesis; glycine from L-serine: step 1/1. Its function is as follows. Catalyzes the reversible interconversion of serine and glycine with tetrahydrofolate (THF) serving as the one-carbon carrier. This reaction serves as the major source of one-carbon groups required for the biosynthesis of purines, thymidylate, methionine, and other important biomolecules. Also exhibits THF-independent aldolase activity toward beta-hydroxyamino acids, producing glycine and aldehydes, via a retro-aldol mechanism. This is Serine hydroxymethyltransferase from Flavobacterium johnsoniae (strain ATCC 17061 / DSM 2064 / JCM 8514 / BCRC 14874 / CCUG 350202 / NBRC 14942 / NCIMB 11054 / UW101) (Cytophaga johnsonae).